We begin with the raw amino-acid sequence, 332 residues long: Polyprenyl transferase yanG (332 aa).

Transmembrane regions (helical) follow at residues 42–62 (IWGA…LAFA), 72–92 (VTAT…FFVV), 145–165 (PAVT…PFMK), 170–190 (FPQV…WVGV), 200–220 (ALPL…FYAT), 242–262 (VKIL…MTAL), 266–286 (LSLI…PWHV), and 300–320 (VFKA…LELV).

Belongs to the UbiA prenyltransferase family. The cofactor is Mg(2+).

Its subcellular location is the membrane. It functions in the pathway secondary metabolite biosynthesis; terpenoid biosynthesis. In terms of biological role, polyprenyl transferase; part of the gene cluster that mediates the biosynthesis of yanuthone D, a fungal isoprenoid epoxycyclohexenone that acts as an antibiotic against fungi and bacteria. The first step of the pathway is the synthesis of 6-methylsalicylic acid (6-MSA) by the polyketide synthase yanA. 6-MSA is then converted to m-cresol by the decarboxylase yanB. The cytochrome P450 monooxygenase yanC then catalyzes the oxidation of m-cresol to toluquinol. Epoxidation of toluquinol is then performed by the short chain dehydrogenase yanD, with the help of yanE, and a further prenylation by yanG leads to 7-deacetoxyyanuthone A. The next step is the hydroxylation of C-22 of 7-deacetoxyyanuthone A by the cytochrome P450 monooxygenase yanH to yield 22-deacetylyanuthone A. O-Mevalon transferase yanI then attaches mevalon to the hydroxyl group of 22-deacetylyanuthone A to produce yanuthone E. Finally, the FAD-dependent monooxygenase yanF oxidizes the hydroxyl group at C15 of yanuthone E to form yanuthone D. Furthermore, several branching points in the pathway lead to the production of yanuthones F and G from 7-deacetoxyyanuthone A; yanuthones H and I from 22-deacetylyanuthone A; and yanuthone J from yanuthone E. YanG is also involved in the synthesis of yanuthone X1 which does not have 6-methylsalicylic acid (6-MSA) as precursor. The sequence is that of Polyprenyl transferase yanG from Aspergillus niger (strain ATCC 1015 / CBS 113.46 / FGSC A1144 / LSHB Ac4 / NCTC 3858a / NRRL 328 / USDA 3528.7).